We begin with the raw amino-acid sequence, 457 residues long: Bifunctional protein GlmU (457 aa).

Positions 1–230 are pyrophosphorylase; sequence MLNVVILAAG…SWETLGVNSR (230 aa). Residues 7-10, lysine 21, glutamine 73, 78-79, 104-106, glycine 140, glutamate 155, asparagine 170, and asparagine 228 each bind UDP-N-acetyl-alpha-D-glucosamine; these read LAAG, GT, and YGD. Mg(2+) is bound at residue aspartate 106. Asparagine 228 is a Mg(2+) binding site. The interval 231 to 251 is linker; that stretch reads VQQAQLERAWQSELARRQLEA. An N-acetyltransferase region spans residues 252-457; it reads GVTLADPARF…EGWKRPVKKS (206 aa). Positions 334 and 352 each coordinate UDP-N-acetyl-alpha-D-glucosamine. Catalysis depends on histidine 364, which acts as the Proton acceptor. Positions 367 and 378 each coordinate UDP-N-acetyl-alpha-D-glucosamine. Residues alanine 381, 387–388, serine 406, alanine 424, and arginine 441 contribute to the acetyl-CoA site; that span reads NY.

The protein in the N-terminal section; belongs to the N-acetylglucosamine-1-phosphate uridyltransferase family. This sequence in the C-terminal section; belongs to the transferase hexapeptide repeat family. In terms of assembly, homotrimer. The cofactor is Mg(2+).

It is found in the cytoplasm. It catalyses the reaction alpha-D-glucosamine 1-phosphate + acetyl-CoA = N-acetyl-alpha-D-glucosamine 1-phosphate + CoA + H(+). The enzyme catalyses N-acetyl-alpha-D-glucosamine 1-phosphate + UTP + H(+) = UDP-N-acetyl-alpha-D-glucosamine + diphosphate. It functions in the pathway nucleotide-sugar biosynthesis; UDP-N-acetyl-alpha-D-glucosamine biosynthesis; N-acetyl-alpha-D-glucosamine 1-phosphate from alpha-D-glucosamine 6-phosphate (route II): step 2/2. It participates in nucleotide-sugar biosynthesis; UDP-N-acetyl-alpha-D-glucosamine biosynthesis; UDP-N-acetyl-alpha-D-glucosamine from N-acetyl-alpha-D-glucosamine 1-phosphate: step 1/1. Its pathway is bacterial outer membrane biogenesis; LPS lipid A biosynthesis. Functionally, catalyzes the last two sequential reactions in the de novo biosynthetic pathway for UDP-N-acetylglucosamine (UDP-GlcNAc). The C-terminal domain catalyzes the transfer of acetyl group from acetyl coenzyme A to glucosamine-1-phosphate (GlcN-1-P) to produce N-acetylglucosamine-1-phosphate (GlcNAc-1-P), which is converted into UDP-GlcNAc by the transfer of uridine 5-monophosphate (from uridine 5-triphosphate), a reaction catalyzed by the N-terminal domain. This Bordetella bronchiseptica (strain ATCC BAA-588 / NCTC 13252 / RB50) (Alcaligenes bronchisepticus) protein is Bifunctional protein GlmU.